The chain runs to 494 residues: Glycerol kinase (494 aa).

Residue threonine 13 participates in ADP binding. Positions 13, 14, and 15 each coordinate ATP. A sn-glycerol 3-phosphate-binding site is contributed by threonine 13. ADP is bound at residue arginine 17. Sn-glycerol 3-phosphate is bound by residues arginine 83, glutamate 84, tyrosine 135, and aspartate 244. 5 residues coordinate glycerol: arginine 83, glutamate 84, tyrosine 135, aspartate 244, and glutamine 245. ADP contacts are provided by threonine 266 and glycine 309. Residues threonine 266, glycine 309, glutamine 313, and glycine 410 each coordinate ATP. Glycine 410 and asparagine 414 together coordinate ADP.

This sequence belongs to the FGGY kinase family.

It carries out the reaction glycerol + ATP = sn-glycerol 3-phosphate + ADP + H(+). It participates in polyol metabolism; glycerol degradation via glycerol kinase pathway; sn-glycerol 3-phosphate from glycerol: step 1/1. With respect to regulation, inhibited by fructose 1,6-bisphosphate (FBP). Key enzyme in the regulation of glycerol uptake and metabolism. Catalyzes the phosphorylation of glycerol to yield sn-glycerol 3-phosphate. This is Glycerol kinase from Shewanella baltica (strain OS195).